The following is a 403-amino-acid chain: Golgin-45 (403 aa).

Positions 1–63 are disordered; it reads MEKMTTLKSS…PRKKVSSDSP (63 aa). Positions 22–26 match the Tankyrase-binding motif motif; that stretch reads RGAGD. At Ser-53 the chain carries Phosphoserine. Residues 123–216 adopt a coiled-coil conformation; the sequence is RKELSEVKKV…QLERMSIQCD (94 aa). Ser-356 bears the Phosphoserine mark. The interval 397 to 403 is essential for interaction with GORASP2; the sequence is QGELIAL.

Interacts with GORASP2. Interacts with the GTP-bound form of RAB2, but not with other Golgi Rab proteins. Identified in a complex with RAB2 and GORASP2. In terms of processing, ADP-ribosylated by tankyrase TNKS and TNKS2. Poly-ADP-ribosylated protein is recognized by RNF146, followed by ubiquitination. Ubiquitinated by RNF146 when poly-ADP-ribosylated, leading to its degradation.

The protein resides in the golgi apparatus membrane. Its function is as follows. Required for normal Golgi structure and for protein transport from the endoplasmic reticulum (ER) through the Golgi apparatus to the cell surface. This is Golgin-45 (Blzf1) from Mus musculus (Mouse).